A 301-amino-acid chain; its full sequence is 1,5-anhydro-D-fructose reductase (301 aa).

D35 lines the NADP(+) pocket. Y40 serves as the catalytic Proton donor. H102 lines the substrate pocket. NADP(+)-binding positions include Q175 and 246–258; that span reads IPKS…IREN.

It belongs to the aldo/keto reductase family. As to quaternary structure, monomer.

It is found in the cytoplasm. The enzyme catalyses 1,5-anhydro-D-glucitol + NADP(+) = 1,5-anhydro-D-fructose + NADPH + H(+). Its activity is regulated as follows. Inhibited by p-chloromercuribenzoic acid and alkyliodines. Functionally, catalyzes the NADPH-dependent reduction of 1,5-anhydro-D-fructose (AF) to 1,5-anhydro-D-glucitol. In Mus musculus (Mouse), this protein is 1,5-anhydro-D-fructose reductase (Akr1e2).